The chain runs to 634 residues: Tyrosine-protein kinase transforming protein erbB (634 aa).

The region spanning 132–399 (FKKVKVLGSG…KMARDPPRYL (268 aa)) is the Protein kinase domain. Residues 138–146 (LGSGAFGTV) and K165 contribute to the ATP site. D257 functions as the Proton acceptor in the catalytic mechanism.

This sequence belongs to the protein kinase superfamily. Tyr protein kinase family. EGF receptor subfamily.

The catalysed reaction is L-tyrosyl-[protein] + ATP = O-phospho-L-tyrosyl-[protein] + ADP + H(+). The protein is Tyrosine-protein kinase transforming protein erbB (V-ERBB) of Avian leukosis virus (ALV).